Here is an 857-residue protein sequence, read N- to C-terminus: DNA mismatch repair protein MutS (857 aa).

ATP is bound at residue 603–610 (GPNMAGKS).

This sequence belongs to the DNA mismatch repair MutS family.

Its function is as follows. This protein is involved in the repair of mismatches in DNA. It is possible that it carries out the mismatch recognition step. This protein has a weak ATPase activity. The chain is DNA mismatch repair protein MutS from Methanothrix thermoacetophila (strain DSM 6194 / JCM 14653 / NBRC 101360 / PT) (Methanosaeta thermophila).